A 24-amino-acid polypeptide reads, in one-letter code: Brevinin-1 (24 aa).

Cys18 and Cys24 are oxidised to a cystine.

The protein belongs to the frog skin active peptide (FSAP) family. Brevinin subfamily. In terms of tissue distribution, expressed by the skin glands.

Its subcellular location is the secreted. Shows antibacterial activity against representative Gram-negative and Gram-positive bacterial species, and a very high hemolytic activity. The protein is Brevinin-1 of Pelophylax porosus brevipodus (Nagoya Daruma pond frog).